The following is an 819-amino-acid chain: Leucine--tRNA ligase (819 aa).

Residues 42 to 52 (PYPSGRLHMGH) carry the 'HIGH' region motif. A 'KMSKS' region motif is present at residues 576–580 (KMSKS). Position 579 (Lys-579) interacts with ATP.

It belongs to the class-I aminoacyl-tRNA synthetase family.

The protein localises to the cytoplasm. It carries out the reaction tRNA(Leu) + L-leucine + ATP = L-leucyl-tRNA(Leu) + AMP + diphosphate. This is Leucine--tRNA ligase from Nitrosococcus oceani (strain ATCC 19707 / BCRC 17464 / JCM 30415 / NCIMB 11848 / C-107).